The sequence spans 116 residues: Iron-sulfur cluster insertion protein ErpA (116 aa).

Iron-sulfur cluster contacts are provided by cysteine 44, cysteine 108, and cysteine 110.

This sequence belongs to the HesB/IscA family. As to quaternary structure, homodimer. Requires iron-sulfur cluster as cofactor.

Required for insertion of 4Fe-4S clusters for at least IspG. This chain is Iron-sulfur cluster insertion protein ErpA, found in Shewanella sp. (strain ANA-3).